Consider the following 226-residue polypeptide: Late protein I226R (226 aa).

A signal peptide spans Met1 to Gly16. Residues Asn142 and Asn164 are each glycosylated (N-linked (GlcNAc...) asparagine; by host).

Belongs to the asfivirus I226R family.

Functionally, plays a role in the inhibition of host NF-kappa-B and IRF3 signaling pathways. Mechanistically, promotes the degradation of host IKBKG through enhancing its ubiquitination leading to inhibition of both pathways. The sequence is that of Late protein I226R from Ornithodoros (relapsing fever ticks).